The primary structure comprises 78 residues: Small ribosomal subunit protein bS16 (78 aa).

This sequence belongs to the bacterial ribosomal protein bS16 family.

In Thermodesulfovibrio yellowstonii (strain ATCC 51303 / DSM 11347 / YP87), this protein is Small ribosomal subunit protein bS16.